We begin with the raw amino-acid sequence, 658 residues long: MGTEDYTFPQGAEELHRRHHTVEAPQPQPFLKSLQYSVKETLFPDDPFRQFKNQNASRKFVLGLKYFLPIFEWAPRYNLKFFKSDLIAGITIASLAIPQGISYAKLANLPPILGLYSSFVPPLVYAVLGSSRDLAVGTVAVASLLTGAMLSKEVDAEKDPKLYLHLAFTATFFAGVLEASLGIFRLGFIVDFLSHATIVGFMGGAATVVSLQQLKGIFGLKHFTDSTDVISVMRSVFSQTHEWRWESGVLGCGFLFFLLSTRYFSIKKPKFFWVAAMAPLTSVILGSLLVYFTHAERHGVQVIGDLKKGLNPLSGSDLIFTSPYMSTAVKTGLITGIIALAEGVAVGRSFAMFKNYNIDGNKEMIAFGMMNIVGSFTSCYLTTGPFSRSAVNYNAGCKTAMSNIVMAIAVMFTLLFLTPLFHYTPLVVLSAIIISAMLGLIDYQAAIHLWKVDKFDFLVCMSAYVGVVFGSVEIGLVVAVAISIARLLLFVSRPKTAVKGNIPNSMIYRNTEQYPSSRTVPGILILEIDAPIYFANASYLRERIIRWIDEEEERVKQSGESSLQYIILDMSAVGNIDTSGISMMVEIKKVIDRRALKLVLSNPKGEVVKKLTRSKFIGDHLGKEWMFLTVGEAVEACSYMLHTFKTEPASKNEPWNNV.

Residues 1–85 (MGTEDYTFPQ…RYNLKFFKSD (85 aa)) lie on the Cytoplasmic side of the membrane. A helical membrane pass occupies residues 86–106 (LIAGITIASLAIPQGISYAKL). The Extracellular portion of the chain corresponds to 107–108 (AN). A helical membrane pass occupies residues 109-129 (LPPILGLYSSFVPPLVYAVLG). The Cytoplasmic portion of the chain corresponds to 130–133 (SSRD). The helical transmembrane segment at 134–154 (LAVGTVAVASLLTGAMLSKEV) threads the bilayer. Topologically, residues 155-163 (DAEKDPKLY) are extracellular. The chain crosses the membrane as a helical span at residues 164–184 (LHLAFTATFFAGVLEASLGIF). Arg-185 is a topological domain (cytoplasmic). Residues 186–206 (LGFIVDFLSHATIVGFMGGAA) traverse the membrane as a helical segment. The Extracellular segment spans residues 207–245 (TVVSLQQLKGIFGLKHFTDSTDVISVMRSVFSQTHEWRW). Residues 246–266 (ESGVLGCGFLFFLLSTRYFSI) traverse the membrane as a helical segment. Residues 267–271 (KKPKF) lie on the Cytoplasmic side of the membrane. A helical membrane pass occupies residues 272-292 (FWVAAMAPLTSVILGSLLVYF). Residues 293-332 (THAERHGVQVIGDLKKGLNPLSGSDLIFTSPYMSTAVKTG) lie on the Extracellular side of the membrane. Residues 333 to 353 (LITGIIALAEGVAVGRSFAMF) form a helical membrane-spanning segment. Residues 354 to 363 (KNYNIDGNKE) lie on the Cytoplasmic side of the membrane. The helical transmembrane segment at 364-384 (MIAFGMMNIVGSFTSCYLTTG) threads the bilayer. The Extracellular segment spans residues 385–398 (PFSRSAVNYNAGCK). A helical transmembrane segment spans residues 399 to 419 (TAMSNIVMAIAVMFTLLFLTP). Topologically, residues 420–425 (LFHYTP) are cytoplasmic. The helical transmembrane segment at 426 to 446 (LVVLSAIIISAMLGLIDYQAA) threads the bilayer. Topologically, residues 447–464 (IHLWKVDKFDFLVCMSAY) are extracellular. A helical membrane pass occupies residues 465–485 (VGVVFGSVEIGLVVAVAISIA). Over 486–658 (RLLLFVSRPK…ASKNEPWNNV (173 aa)) the chain is Cytoplasmic. Residues 513–637 (QYPSSRTVPG…LTVGEAVEAC (125 aa)) form the STAS domain.

The protein belongs to the SLC26A/SulP transporter (TC 2.A.53) family. In terms of tissue distribution, expressed only in leaves.

It is found in the membrane. H(+)/sulfate cotransporter that may play a role in the regulation of sulfate assimilation. This chain is Sulfate transporter 3.1 (SULTR3;1), found in Arabidopsis thaliana (Mouse-ear cress).